Consider the following 500-residue polypeptide: Beta-glucosidase 2 (500 aa).

Residues 1–24 (MGAAAAAGFFFVLLFLSVQGGAVG) form the signal peptide. Residues Q44 and H144 each coordinate a beta-D-glucoside. The active-site Proton donor is E190. A disulfide bridge connects residues C209 and C218. N-linked (GlcNAc...) asparagine glycosylation occurs at N222. A beta-D-glucoside is bound by residues Y334 and E403. E403 serves as the catalytic Nucleophile. N410 carries N-linked (GlcNAc...) asparagine glycosylation. Position 445 (W445) interacts with a beta-D-glucoside.

It belongs to the glycosyl hydrolase 1 family.

It catalyses the reaction Hydrolysis of terminal, non-reducing beta-D-glucosyl residues with release of beta-D-glucose.. This chain is Beta-glucosidase 2 (BGLU2), found in Oryza sativa subsp. japonica (Rice).